The following is a 102-amino-acid chain: Small ribosomal subunit protein uS10 (102 aa).

This sequence belongs to the universal ribosomal protein uS10 family. In terms of assembly, part of the 30S ribosomal subunit.

Involved in the binding of tRNA to the ribosomes. This is Small ribosomal subunit protein uS10 from Methanothermobacter thermautotrophicus (strain ATCC 29096 / DSM 1053 / JCM 10044 / NBRC 100330 / Delta H) (Methanobacterium thermoautotrophicum).